A 431-amino-acid polypeptide reads, in one-letter code: Divergent protein kinase domain 1B (431 aa).

Topologically, residues 1–30 are cytoplasmic; the sequence is MRKLRRLVHMVLFCPISKGLQSRLPGIKVK. The May mediate ER retention signature appears at 5–6; the sequence is RR. A helical membrane pass occupies residues 31–51; that stretch reads YLFLAWLSVFVGSWVVYMHYS. Residues 52 to 431 are Lumenal-facing; sequence SYSELCRGHV…WKKISNTKYS (380 aa). Disulfide bonds link Cys57-Cys94 and Cys62-Cys117.

The protein belongs to the DIPK family. Among the many cysteines in the lumenal domain, most are probably involved in disulfide bonds.

Its subcellular location is the endoplasmic reticulum membrane. The polypeptide is Divergent protein kinase domain 1B (dipk1b) (Xenopus tropicalis (Western clawed frog)).